A 441-amino-acid chain; its full sequence is Maltose-6'-phosphate glucosidase (441 aa).

4–70 (FSILIAGGGS…PQIKFSYSTN (67 aa)) contributes to the NAD(+) binding site. Residues Arg93 and Asn147 each coordinate substrate. Cys169 serves as a coordination point for Mn(2+). Asp170 serves as the catalytic Proton donor. His200 serves as a coordination point for Mn(2+). Residue Tyr264 is the Proton acceptor of the active site. Residue Arg284 participates in substrate binding.

Belongs to the glycosyl hydrolase 4 family. In terms of assembly, homotetramer. NAD(+) is required as a cofactor. It depends on Mn(2+) as a cofactor. The cofactor is Fe(2+). Co(2+) serves as cofactor. Requires Ni(2+) as cofactor.

The enzyme catalyses alpha-maltose 6'-phosphate + H2O = D-glucose 6-phosphate + D-glucose. The protein operates within glycan degradation; maltose degradation. Functionally, hydrolyzes a wide variety of 6-phospho-alpha-D-glucosides including maltose-6'P, trehalose-6P and the 6'-phosphorylated derivatives of the five linkage-isomeric alpha-D-glucosyl-D-fructoses: trehalulose-6'P, turanose-6'P, maltulose-6'P, leucrose-6'P, and palatinose-6'P. However, sucrose-6P is not a substrate for MalH, and this enzyme also fails to hydrolyze beta-O-linked phosphorylated disaccharides such as cellobiose-6'P and gentobiose-6'P. The sequence is that of Maltose-6'-phosphate glucosidase (malH) from Fusobacterium mortiferum.